The following is a 1322-amino-acid chain: Phosphoribosylformylglycinamidine synthase (1322 aa).

Gly300–Asp311 serves as a coordination point for ATP. The span at Gln593–Pro608 shows a compositional bias: polar residues. Residues Gln593–Pro613 are disordered. Ala702 lines the ATP pocket. Mg(2+)-binding residues include Asp703, Glu742, Asn746, and Asp915. Position 917 (Ser917) interacts with ATP. The Glutamine amidotransferase type-1 domain occupies Val1073–Gly1322. Cys1166 acts as the Nucleophile in catalysis. Active-site residues include His1287 and Glu1289.

In the N-terminal section; belongs to the FGAMS family. Monomer.

Its subcellular location is the cytoplasm. The catalysed reaction is N(2)-formyl-N(1)-(5-phospho-beta-D-ribosyl)glycinamide + L-glutamine + ATP + H2O = 2-formamido-N(1)-(5-O-phospho-beta-D-ribosyl)acetamidine + L-glutamate + ADP + phosphate + H(+). The protein operates within purine metabolism; IMP biosynthesis via de novo pathway; 5-amino-1-(5-phospho-D-ribosyl)imidazole from N(2)-formyl-N(1)-(5-phospho-D-ribosyl)glycinamide: step 1/2. Functionally, phosphoribosylformylglycinamidine synthase involved in the purines biosynthetic pathway. Catalyzes the ATP-dependent conversion of formylglycinamide ribonucleotide (FGAR) and glutamine to yield formylglycinamidine ribonucleotide (FGAM) and glutamate. In Xylella fastidiosa (strain 9a5c), this protein is Phosphoribosylformylglycinamidine synthase.